We begin with the raw amino-acid sequence, 343 residues long: Thiamine-phosphate synthase (343 aa).

The unknown stretch occupies residues 1-123; that stretch reads MQQASPTAIA…GACCKQLRYR (123 aa). A thiamine-phosphate synthase region spans residues 124 to 343; sequence VYALESGLLG…LLTQLSRINP (220 aa). 4-amino-2-methyl-5-(diphosphooxymethyl)pyrimidine contacts are provided by residues 171–175 and asparagine 203; that span reads QYRDK. Residues aspartate 204 and aspartate 223 each coordinate Mg(2+). Serine 242 contributes to the 4-amino-2-methyl-5-(diphosphooxymethyl)pyrimidine binding site. 2-[(2R,5Z)-2-carboxy-4-methylthiazol-5(2H)-ylidene]ethyl phosphate is bound at residue 268-270; sequence TPT. A 4-amino-2-methyl-5-(diphosphooxymethyl)pyrimidine-binding site is contributed by lysine 271. Glycine 298 lines the 2-[(2R,5Z)-2-carboxy-4-methylthiazol-5(2H)-ylidene]ethyl phosphate pocket.

The protein belongs to the thiamine-phosphate synthase family. Mg(2+) serves as cofactor.

It carries out the reaction 2-[(2R,5Z)-2-carboxy-4-methylthiazol-5(2H)-ylidene]ethyl phosphate + 4-amino-2-methyl-5-(diphosphooxymethyl)pyrimidine + 2 H(+) = thiamine phosphate + CO2 + diphosphate. The enzyme catalyses 2-(2-carboxy-4-methylthiazol-5-yl)ethyl phosphate + 4-amino-2-methyl-5-(diphosphooxymethyl)pyrimidine + 2 H(+) = thiamine phosphate + CO2 + diphosphate. The catalysed reaction is 4-methyl-5-(2-phosphooxyethyl)-thiazole + 4-amino-2-methyl-5-(diphosphooxymethyl)pyrimidine + H(+) = thiamine phosphate + diphosphate. It functions in the pathway cofactor biosynthesis; thiamine diphosphate biosynthesis; thiamine phosphate from 4-amino-2-methyl-5-diphosphomethylpyrimidine and 4-methyl-5-(2-phosphoethyl)-thiazole: step 1/1. Its function is as follows. Condenses 4-methyl-5-(beta-hydroxyethyl)thiazole monophosphate (THZ-P) and 2-methyl-4-amino-5-hydroxymethyl pyrimidine pyrophosphate (HMP-PP) to form thiamine monophosphate (TMP). The polypeptide is Thiamine-phosphate synthase (Synechocystis sp. (strain ATCC 27184 / PCC 6803 / Kazusa)).